A 542-amino-acid chain; its full sequence is CTP synthase (542 aa).

Residues 1 to 265 (MTRYVFITGG…DREVLGHFGL (265 aa)) are amidoligase domain. Serine 13 contacts CTP. A UTP-binding site is contributed by serine 13. ATP-binding positions include 14 to 19 (SLGKGL) and aspartate 71. Residues aspartate 71 and glutamate 139 each coordinate Mg(2+). CTP is bound by residues 146-148 (DIE), 186-191 (KTKPTQ), and lysine 222. Residues 186–191 (KTKPTQ) and lysine 222 each bind UTP. Positions 291 to 541 (SIAIVGKYTG…VGAAIEQSRL (251 aa)) constitute a Glutamine amidotransferase type-1 domain. Position 353 (glycine 353) interacts with L-glutamine. Cysteine 380 functions as the Nucleophile; for glutamine hydrolysis in the catalytic mechanism. L-glutamine is bound by residues 381–384 (FGMQ), glutamate 404, and arginine 469. Residues histidine 514 and glutamate 516 contribute to the active site.

Belongs to the CTP synthase family. As to quaternary structure, homotetramer.

It catalyses the reaction UTP + L-glutamine + ATP + H2O = CTP + L-glutamate + ADP + phosphate + 2 H(+). The catalysed reaction is L-glutamine + H2O = L-glutamate + NH4(+). The enzyme catalyses UTP + NH4(+) + ATP = CTP + ADP + phosphate + 2 H(+). It participates in pyrimidine metabolism; CTP biosynthesis via de novo pathway; CTP from UDP: step 2/2. Its activity is regulated as follows. Allosterically activated by GTP, when glutamine is the substrate; GTP has no effect on the reaction when ammonia is the substrate. The allosteric effector GTP functions by stabilizing the protein conformation that binds the tetrahedral intermediate(s) formed during glutamine hydrolysis. Inhibited by the product CTP, via allosteric rather than competitive inhibition. Its function is as follows. Catalyzes the ATP-dependent amination of UTP to CTP with either L-glutamine or ammonia as the source of nitrogen. Regulates intracellular CTP levels through interactions with the four ribonucleotide triphosphates. This chain is CTP synthase, found in Methylobacterium radiotolerans (strain ATCC 27329 / DSM 1819 / JCM 2831 / NBRC 15690 / NCIMB 10815 / 0-1).